The primary structure comprises 393 residues: S-adenosylmethionine decarboxylase proenzyme (393 aa).

Catalysis depends on residues Glu11 and Glu14. Ser71 (schiff-base intermediate with substrate; via pyruvic acid) is an active-site residue. The residue at position 71 (Ser71) is a Pyruvic acid (Ser); by autocatalysis. Cys85 acts as the Proton donor; for catalytic activity in catalysis. Residues Ser236 and His249 each act as proton acceptor; for processing activity in the active site.

The protein belongs to the eukaryotic AdoMetDC family. Pyruvate is required as a cofactor. Post-translationally, is synthesized initially as an inactive proenzyme. Formation of the active enzyme involves a self-maturation process in which the active site pyruvoyl group is generated from an internal serine residue via an autocatalytic post-translational modification. Two non-identical subunits are generated from the proenzyme in this reaction, and the pyruvate is formed at the N-terminus of the alpha chain, which is derived from the carboxyl end of the proenzyme. The post-translation cleavage follows an unusual pathway, termed non-hydrolytic serinolysis, in which the side chain hydroxyl group of the serine supplies its oxygen atom to form the C-terminus of the beta chain, while the remainder of the serine residue undergoes an oxidative deamination to produce ammonia and the pyruvoyl group blocking the N-terminus of the alpha chain.

The catalysed reaction is S-adenosyl-L-methionine + H(+) = S-adenosyl 3-(methylsulfanyl)propylamine + CO2. It functions in the pathway amine and polyamine biosynthesis; S-adenosylmethioninamine biosynthesis; S-adenosylmethioninamine from S-adenosyl-L-methionine: step 1/1. This Hordeum chilense (Barley) protein is S-adenosylmethionine decarboxylase proenzyme (SAMDC).